We begin with the raw amino-acid sequence, 167 residues long: Large ribosomal subunit protein bL9 (167 aa).

It belongs to the bacterial ribosomal protein bL9 family.

Functionally, binds to the 23S rRNA. The chain is Large ribosomal subunit protein bL9 from Nitratidesulfovibrio vulgaris (strain DSM 19637 / Miyazaki F) (Desulfovibrio vulgaris).